The chain runs to 121 residues: Basic phospholipase A2 VRV-PL-VIIIa (121 aa).

7 cysteine pairs are disulfide-bonded: Cys-26–Cys-115, Cys-28–Cys-44, Cys-43–Cys-95, Cys-49–Cys-121, Cys-50–Cys-88, Cys-57–Cys-81, and Cys-75–Cys-86. Positions 27, 29, and 31 each coordinate Ca(2+). His-47 is an active-site residue. Asp-48 is a binding site for Ca(2+). Asp-89 is a catalytic residue.

The protein belongs to the phospholipase A2 family. Group II subfamily. D49 sub-subfamily. In terms of assembly, monomer. Ca(2+) is required as a cofactor. As to expression, expressed by the venom gland.

It localises to the secreted. It carries out the reaction a 1,2-diacyl-sn-glycero-3-phosphocholine + H2O = a 1-acyl-sn-glycero-3-phosphocholine + a fatty acid + H(+). Oxyphenbutazone (OPB), anisic acid and atropine inhibit the enzymatic activity by binding at the substrate-binding site. P-coumaric acid, resveratrol, spermidine, corticosterone and gramine derivative inhibit the enzymatic activity by binding at the substrate-binding site. Functionally, snake venom phospholipase A2 (PLA2) that shows weak neurotoxicity and medium anticoagulant effects by binding to factor Xa (F10) and inhibiting the prothrombinase activity (IC(50) is 130 nM). It also damages vital organs such as lung, liver and kidney, displays edema-inducing activities when injected into the foot pads of mice and induces necrosis of muscle cells when injected into the thigh muscle. Has a low enzymatic activity. PLA2 catalyzes the calcium-dependent hydrolysis of the 2-acyl groups in 3-sn-phosphoglycerides. In Daboia russelii (Russel's viper), this protein is Basic phospholipase A2 VRV-PL-VIIIa.